A 99-amino-acid chain; its full sequence is Co-chaperonin GroES (99 aa).

Belongs to the GroES chaperonin family. Heptamer of 7 subunits arranged in a ring. Interacts with the chaperonin GroEL.

It localises to the cytoplasm. In terms of biological role, together with the chaperonin GroEL, plays an essential role in assisting protein folding. The GroEL-GroES system forms a nano-cage that allows encapsulation of the non-native substrate proteins and provides a physical environment optimized to promote and accelerate protein folding. GroES binds to the apical surface of the GroEL ring, thereby capping the opening of the GroEL channel. The protein is Co-chaperonin GroES of Methylacidiphilum infernorum (isolate V4) (Methylokorus infernorum (strain V4)).